The chain runs to 256 residues: Follistatin-related protein 3 (256 aa).

The N-terminal stretch at Met-1 to Ala-23 is a signal peptide. The TB domain occupies Gly-34–Gly-105. 8 cysteine pairs are disulfide-bonded: Cys-36/Cys-59, Cys-46/Cys-90, Cys-60/Cys-93, Cys-97/Cys-108, Cys-102/Cys-117, Cys-119/Cys-151, Cys-123/Cys-144, and Cys-133/Cys-165. Residue Asn-71 is glycosylated (N-linked (GlcNAc...) asparagine). The Follistatin-like 1 domain occupies Cys-97–Cys-117. 2 Kazal-like domains span residues Leu-111–Lys-167 and Ser-187–Gly-243. One can recognise a Follistatin-like 2 domain in the interval Ser-168–Val-191. 3 disulfides stabilise this stretch: Cys-193/Cys-227, Cys-198/Cys-220, and Cys-209/Cys-241. A glycan (N-linked (GlcNAc...) asparagine) is linked at Asn-213.

As to quaternary structure, interacts with INHBA and INHBB. Interacts with FN1. Interacts with ADAM12. Interacts with MLLT10; the interaction enhances MLLT10 in vitro transcriptional activity and self-association. Interacts with MSTN. Abundantly expressed in heart, lung, kidney and testis. Continuously expressed in embryonic heart.

The protein localises to the secreted. It localises to the nucleus. Functionally, the secreted form is a binding and antagonizing protein for members of the TGF-beta family, such as activin, BMP2 and MSTN. Inhibits activin A-, activin B-, BMP2- and MSDT-induced cellular signaling; more effective on activin A than on activin B. Involved in bone formation; inhibits osteoclast differentiation. Involved in hematopoiesis; involved in differentiation of hemopoietic progenitor cells, increases hematopoietic cell adhesion to fibronectin and seems to contribute to the adhesion of hematopoietic precursor cells to the bone marrow stroma. The nuclear form is probably involved in transcriptional regulation via interaction with MLLT10. The polypeptide is Follistatin-related protein 3 (Fstl3) (Mus musculus (Mouse)).